The chain runs to 285 residues: MKYIGAHVSAAGGLANAAIRAAEIDATAFALFTKNQRQWRAAPLTTQTIDKFKAACEKYHYTSAQILPHDSYLINLGHPVAEALEKSRDAFIDEMQRCEQLGLSLLNFHPGSHLMQISEEDCLARIAESINIALDKTQGVTAVIENSAGQGSNLGFKFEHLAAIIDGVEDKSRVGVCIDTCHAFAAGYDLRTPAECEKTFADFARIVGFKYLRGMHLNDAKSTFGSRVDRHHSLGEGNIGHDAFRWIMQDDRFDGIPLILETINPDIWAEEIAWLKAQQTEKAVA.

Histidine 69, histidine 109, glutamate 145, aspartate 179, histidine 182, histidine 216, aspartate 229, histidine 231, and glutamate 261 together coordinate Zn(2+).

It belongs to the AP endonuclease 2 family. The cofactor is Zn(2+).

The catalysed reaction is Endonucleolytic cleavage to 5'-phosphooligonucleotide end-products.. Functionally, endonuclease IV plays a role in DNA repair. It cleaves phosphodiester bonds at apurinic or apyrimidinic (AP) sites, generating a 3'-hydroxyl group and a 5'-terminal sugar phosphate. The polypeptide is Probable endonuclease 4 (Escherichia coli O81 (strain ED1a)).